Consider the following 182-residue polypeptide: Large ribosomal subunit protein uL5 (182 aa).

It belongs to the universal ribosomal protein uL5 family. Part of the 50S ribosomal subunit; part of the 5S rRNA/L5/L18/L25 subcomplex. Contacts the 5S rRNA and the P site tRNA. Forms a bridge to the 30S subunit in the 70S ribosome.

Functionally, this is one of the proteins that bind and probably mediate the attachment of the 5S RNA into the large ribosomal subunit, where it forms part of the central protuberance. In the 70S ribosome it contacts protein S13 of the 30S subunit (bridge B1b), connecting the 2 subunits; this bridge is implicated in subunit movement. Contacts the P site tRNA; the 5S rRNA and some of its associated proteins might help stabilize positioning of ribosome-bound tRNAs. The polypeptide is Large ribosomal subunit protein uL5 (Thermosipho melanesiensis (strain DSM 12029 / CIP 104789 / BI429)).